We begin with the raw amino-acid sequence, 369 residues long: tRNA/tmRNA (uracil-C(5))-methyltransferase (369 aa).

Q190, Y218, N223, E239, and D301 together coordinate S-adenosyl-L-methionine. C326 (nucleophile) is an active-site residue. E360 acts as the Proton acceptor in catalysis.

Belongs to the class I-like SAM-binding methyltransferase superfamily. RNA M5U methyltransferase family. TrmA subfamily.

The enzyme catalyses uridine(54) in tRNA + S-adenosyl-L-methionine = 5-methyluridine(54) in tRNA + S-adenosyl-L-homocysteine + H(+). The catalysed reaction is uridine(341) in tmRNA + S-adenosyl-L-methionine = 5-methyluridine(341) in tmRNA + S-adenosyl-L-homocysteine + H(+). Functionally, dual-specificity methyltransferase that catalyzes the formation of 5-methyluridine at position 54 (m5U54) in all tRNAs, and that of position 341 (m5U341) in tmRNA (transfer-mRNA). In Vibrio parahaemolyticus serotype O3:K6 (strain RIMD 2210633), this protein is tRNA/tmRNA (uracil-C(5))-methyltransferase.